Consider the following 273-residue polypeptide: Putative ankyrin repeat protein RBE_0317 (273 aa).

5 ANK repeats span residues 31–60, 93–123, 127–157, 161–191, and 195–225; these read LGKEIFPIATFFDKNDIIRTLMEEKIDFYS, NGNTLLHAAIDQGKSEVVKFLTSYKNLEVNT, GGNSPLHLAIKSNNPEIVEMLLSYENINVNE, YGDTTLHKAIRSYNHKIIEMLLLREEIDVNE, and QGETPLHGAVKSNRPEIVKMLLSHKNMDTKQ.

The protein is Putative ankyrin repeat protein RBE_0317 of Rickettsia bellii (strain RML369-C).